The primary structure comprises 639 residues: Tetracycline resistance protein TetM from transposon Tn5251 (639 aa).

The tr-type G domain occupies 1 to 242; that stretch reads MKIINIGVLA…VITNKFYSST (242 aa). GTP contacts are provided by residues 10–17, 74–78, and 128–131; these read AHVDAGKT, DTPGH, and NKID.

This sequence belongs to the TRAFAC class translation factor GTPase superfamily. Classic translation factor GTPase family. TetM/TetO subfamily.

In terms of biological role, abolishes the inhibitory effect of tetracyclin on protein synthesis by a non-covalent modification of the ribosomes. The polypeptide is Tetracycline resistance protein TetM from transposon Tn5251 (tetM(5251)) (Streptococcus pneumoniae).